A 197-amino-acid chain; its full sequence is Ribosome maturation factor RimM (197 aa).

The PRC barrel domain maps to glutamate 99–leucine 174.

Belongs to the RimM family. Binds ribosomal protein uS19.

It localises to the cytoplasm. Functionally, an accessory protein needed during the final step in the assembly of 30S ribosomal subunit, possibly for assembly of the head region. Essential for efficient processing of 16S rRNA. May be needed both before and after RbfA during the maturation of 16S rRNA. It has affinity for free ribosomal 30S subunits but not for 70S ribosomes. The sequence is that of Ribosome maturation factor RimM from Bartonella quintana (strain Toulouse) (Rochalimaea quintana).